Reading from the N-terminus, the 248-residue chain is Tetrachloro-P-hydroquinone reductive dehalogenase (248 aa).

The GST N-terminal domain maps to 2–84; sequence PEVSLYNYTM…EAAKLGKVGI (83 aa). Residues 133–248 enclose the GST C-terminal domain; that stretch reads YAEKYPELRS…RVMPNWKGGI (116 aa).

It belongs to the GST superfamily. Homodimer.

The catalysed reaction is 2,6-dichlorohydroquinone + glutathione disulfide + chloride + H(+) = 2,3,6-trichlorohydroquinone + 2 glutathione. It catalyses the reaction 2,3,6-trichlorohydroquinone + glutathione disulfide + chloride = 2,3,5,6-tetrachlorohydroquinone + 2 glutathione. The protein operates within xenobiotic degradation; pentachlorophenol degradation. Its function is as follows. Sequential reduction of tetrachloro-p-hydroquinone to monochlorophenol, using glutathione as the reducing agent. This is Tetrachloro-P-hydroquinone reductive dehalogenase (pcpC) from Sphingobium chlorophenolicum.